The chain runs to 384 residues: S-adenosylmethionine synthase (384 aa).

His15 lines the ATP pocket. Asp17 provides a ligand contact to Mg(2+). Glu43 serves as a coordination point for K(+). L-methionine contacts are provided by Glu56 and Gln99. Positions 99-109 (QSPDINQGVDR) are flexible loop. ATP-binding positions include 164-166 (DAK), 230-231 (RF), Asp239, 245-246 (RK), Ala262, and Lys266. Residue Asp239 participates in L-methionine binding. Residue Lys270 participates in L-methionine binding.

It belongs to the AdoMet synthase family. As to quaternary structure, homotetramer; dimer of dimers. Mg(2+) serves as cofactor. It depends on K(+) as a cofactor.

Its subcellular location is the cytoplasm. It carries out the reaction L-methionine + ATP + H2O = S-adenosyl-L-methionine + phosphate + diphosphate. Its pathway is amino-acid biosynthesis; S-adenosyl-L-methionine biosynthesis; S-adenosyl-L-methionine from L-methionine: step 1/1. Functionally, catalyzes the formation of S-adenosylmethionine (AdoMet) from methionine and ATP. The overall synthetic reaction is composed of two sequential steps, AdoMet formation and the subsequent tripolyphosphate hydrolysis which occurs prior to release of AdoMet from the enzyme. In Edwardsiella ictaluri (strain 93-146), this protein is S-adenosylmethionine synthase.